Here is a 165-residue protein sequence, read N- to C-terminus: Large ribosomal subunit protein uL10 (165 aa).

The protein belongs to the universal ribosomal protein uL10 family. As to quaternary structure, part of the ribosomal stalk of the 50S ribosomal subunit. The N-terminus interacts with L11 and the large rRNA to form the base of the stalk. The C-terminus forms an elongated spine to which L12 dimers bind in a sequential fashion forming a multimeric L10(L12)X complex.

Functionally, forms part of the ribosomal stalk, playing a central role in the interaction of the ribosome with GTP-bound translation factors. The sequence is that of Large ribosomal subunit protein uL10 from Enterobacter sp. (strain 638).